The primary structure comprises 275 residues: Erythroagglutinating phytohemagglutinin (275 aa).

An N-terminal signal peptide occupies residues 1–21; it reads MASSNLLSLALFLVLLTHANS. Asn33 is a glycosylation site (N-linked (GlcNAc...) (high mannose) asparagine). 2 N-linked (GlcNAc...) asparagine glycosylation sites follow: Asn81 and Asn101.

It belongs to the leguminous lectin family.

Its function is as follows. This insecticidal carbohydrate-binding lectin is toxic for the cowpea weevil. The protein is Erythroagglutinating phytohemagglutinin (DLEC1) of Phaseolus vulgaris (Kidney bean).